The sequence spans 422 residues: MPSIAPFLRTTPLFTISLLLRLGLLFYGIYQDAHSALKYTDIDYLVFTDASRFVADGQSPYARDTYRYTPLLAWILLPTVRFPAFGKLVFAAADLLAGWLILRVLRRRGMDEATAGGFSALWLWNPMVATISTRGSSEGLLGVLTMGLLWAVDRRKFSLAAIILGLSVHFKIYPFIYAPAIVWWMDDARLGKETKAAPQSSSIKDAVANFFTPDRLKFGLLSLITFMILNLVMFAIYETPFLVHTYFHHVTRIDHRHNFSPYNVLLYLTSATPAHAAPAFRIESFAFLPQLLLSCVLIPLALAKRDLATSMMAQTFAFVTFNKVCTSQYFLWYMIFLPLYLPNSSFLRNGKLGIFALLLWIVSQAAWLQQGYELEFLGISTFYPGLWLASIAFFLVNCWILGVIISDGARQSTRSTVKFHVE.

A run of 8 helical transmembrane segments spans residues 10–30 (TTPLFTISLLLRLGLLFYGIY), 82–102 (FPAFGKLVFAAADLLAGWLIL), 162–182 (IILGLSVHFKIYPFIYAPAIV), 216–236 (LKFGLLSLITFMILNLVMFAI), 282–302 (IESFAFLPQLLLSCVLIPLAL), 327–347 (SQYFLWYMIFLPLYLPNSSFL), 352–372 (LGIFALLLWIVSQAAWLQQGY), and 385–405 (GLWLASIAFFLVNCWILGVII).

This sequence belongs to the PIGM family.

It is found in the endoplasmic reticulum membrane. It participates in glycolipid biosynthesis; glycosylphosphatidylinositol-anchor biosynthesis. In terms of biological role, mannosyltransferase involved in glycosylphosphatidylinositol-anchor biosynthesis. Transfers the first alpha-1,4-mannose to GlcN-acyl-PI during GPI precursor assembly. Required for cell wall integrity. This Gibberella zeae (strain ATCC MYA-4620 / CBS 123657 / FGSC 9075 / NRRL 31084 / PH-1) (Wheat head blight fungus) protein is GPI mannosyltransferase 1 (GPI14).